Consider the following 289-residue polypeptide: Oxaloacetate decarboxylase (289 aa).

S47 contributes to the substrate binding site. Position 85 (D85) interacts with Mg(2+). R156 and H232 together coordinate substrate.

The protein belongs to the isocitrate lyase/PEP mutase superfamily. Oxaloacetate decarboxylase family. Homotetramer; dimer of dimers. Mg(2+) serves as cofactor.

It carries out the reaction oxaloacetate + H(+) = pyruvate + CO2. Its function is as follows. Catalyzes the decarboxylation of oxaloacetate into pyruvate. Seems to play a role in maintaining cellular concentrations of bicarbonate and pyruvate. This Rhodopseudomonas palustris (strain HaA2) protein is Oxaloacetate decarboxylase.